We begin with the raw amino-acid sequence, 545 residues long: ATP synthase subunit alpha (545 aa).

Residue 173–180 (GDRQTGKT) participates in ATP binding.

The protein belongs to the ATPase alpha/beta chains family. As to quaternary structure, F-type ATPases have 2 components, CF(1) - the catalytic core - and CF(0) - the membrane proton channel. CF(1) has five subunits: alpha(3), beta(3), gamma(1), delta(1), epsilon(1). CF(0) has three main subunits: a(1), b(2) and c(9-12). The alpha and beta chains form an alternating ring which encloses part of the gamma chain. CF(1) is attached to CF(0) by a central stalk formed by the gamma and epsilon chains, while a peripheral stalk is formed by the delta and b chains.

Its subcellular location is the cell membrane. The catalysed reaction is ATP + H2O + 4 H(+)(in) = ADP + phosphate + 5 H(+)(out). Functionally, produces ATP from ADP in the presence of a proton gradient across the membrane. The alpha chain is a regulatory subunit. The protein is ATP synthase subunit alpha of Paenarthrobacter aurescens (strain TC1).